An 843-amino-acid chain; its full sequence is Translation initiation factor IF-2 (843 aa).

The tract at residues 94–259 (QRSPEEIEAE…AHGFQSPTGP (166 aa)) is disordered. Residues 96–135 (SPEEIEAERKREMDERRAVENAARQKAEEEAKRRAEEDAR) are compositionally biased toward basic and acidic residues. A compositionally biased stretch (low complexity) spans 136–177 (NQPAAGQPASAPAQPVAAAEPVREAPAPAAAAPAPASAAPSA). Basic and acidic residues-rich tracts occupy residues 178 to 219 (DARK…EKAP) and 227 to 236 (TTDEESDSFR). Positions 237–250 (RGGRGKSRLKKRNA) are enriched in basic residues. A tr-type G domain is found at 343–512 (SRAPVVTVMG…LLQAEVLELK (170 aa)). The segment at 352–359 (GHVDHGKT) is G1. Residue 352 to 359 (GHVDHGKT) participates in GTP binding. Positions 377-381 (GITQH) are G2. The tract at residues 398 to 401 (DTPG) is G3. GTP is bound by residues 398–402 (DTPGH) and 452–455 (NKID). A G4 region spans residues 452-455 (NKID). The segment at 488 to 490 (SAK) is G5.

It belongs to the TRAFAC class translation factor GTPase superfamily. Classic translation factor GTPase family. IF-2 subfamily.

The protein localises to the cytoplasm. In terms of biological role, one of the essential components for the initiation of protein synthesis. Protects formylmethionyl-tRNA from spontaneous hydrolysis and promotes its binding to the 30S ribosomal subunits. Also involved in the hydrolysis of GTP during the formation of the 70S ribosomal complex. The polypeptide is Translation initiation factor IF-2 (Pseudomonas savastanoi pv. phaseolicola (strain 1448A / Race 6) (Pseudomonas syringae pv. phaseolicola (strain 1448A / Race 6))).